Here is a 418-residue protein sequence, read N- to C-terminus: Exodeoxyribonuclease 7 large subunit (418 aa).

This sequence belongs to the XseA family. As to quaternary structure, heterooligomer composed of large and small subunits.

The protein localises to the cytoplasm. The catalysed reaction is Exonucleolytic cleavage in either 5'- to 3'- or 3'- to 5'-direction to yield nucleoside 5'-phosphates.. Functionally, bidirectionally degrades single-stranded DNA into large acid-insoluble oligonucleotides, which are then degraded further into small acid-soluble oligonucleotides. This is Exodeoxyribonuclease 7 large subunit from Acaryochloris marina (strain MBIC 11017).